A 63-amino-acid chain; its full sequence is Small integral membrane protein 43 (63 aa).

Important for interaction with SLC2A1 and SLC2A3 regions lie at residues 7 to 29 (LLLY…FVVI) and 51 to 57 (HREPWGF). A helical transmembrane segment spans residues 9–29 (LYLALFFFLLFLLFLLLFVVI).

In terms of assembly, interacts with glucose transporters SLC2A1/GLUT1 and SLC2A3/GLUT3; the interactions may promote SLC2A1- and SLC2A3-mediated glucose transport to meet the energy needs of mesendoderm differentiation. As to expression, accumulates in the posterior primitive streak of mid-gastrulation embryos at 7.0 dpc. In the adult, highly abundant and enriched in the brain compared to other organs.

The protein resides in the cell membrane. In terms of biological role, required for mesendoderm differentiation. Interacts with glucose transporters and promotes glucose uptake. Probably augments the glucose uptake capacity of glucose transporter proteins to meet the energy needs of mesendoderm differentiation. The sequence is that of Small integral membrane protein 43 from Mus musculus (Mouse).